Consider the following 317-residue polypeptide: Ribosomal protein L11 methyltransferase (317 aa).

The S-adenosyl-L-methionine site is built by threonine 158, glycine 179, aspartate 201, and asparagine 244.

This sequence belongs to the methyltransferase superfamily. PrmA family.

Its subcellular location is the cytoplasm. The enzyme catalyses L-lysyl-[protein] + 3 S-adenosyl-L-methionine = N(6),N(6),N(6)-trimethyl-L-lysyl-[protein] + 3 S-adenosyl-L-homocysteine + 3 H(+). Methylates ribosomal protein L11. In Streptococcus agalactiae serotype III (strain NEM316), this protein is Ribosomal protein L11 methyltransferase.